We begin with the raw amino-acid sequence, 428 residues long: L-rhamnonate dehydratase (428 aa).

Positions 56 and 82 each coordinate substrate. 3 residues coordinate Mg(2+): Asp249, Glu275, and Glu303. The active-site Proton acceptor is His352. Glu372 lines the substrate pocket.

This sequence belongs to the mandelate racemase/muconate lactonizing enzyme family. RhamD subfamily. As to quaternary structure, homooctamer; tetramer of dimers. Requires Mg(2+) as cofactor.

The catalysed reaction is L-rhamnonate = 2-dehydro-3-deoxy-L-rhamnonate + H2O. Its function is as follows. Catalyzes the dehydration of L-rhamnonate to 2-keto-3-deoxy-L-rhamnonate (KDR). The protein is L-rhamnonate dehydratase of Shigella sonnei (strain Ss046).